The following is a 307-amino-acid chain: Protoheme IX farnesyltransferase (307 aa).

Transmembrane regions (helical) follow at residues I24 to V44, P52 to L72, V115 to F135, I152 to G172, V179 to Y199, Q224 to E244, A245 to V265, and F284 to V304.

Belongs to the UbiA prenyltransferase family. Protoheme IX farnesyltransferase subfamily.

The protein localises to the cell inner membrane. The enzyme catalyses heme b + (2E,6E)-farnesyl diphosphate + H2O = Fe(II)-heme o + diphosphate. The protein operates within porphyrin-containing compound metabolism; heme O biosynthesis; heme O from protoheme: step 1/1. In terms of biological role, converts heme B (protoheme IX) to heme O by substitution of the vinyl group on carbon 2 of heme B porphyrin ring with a hydroxyethyl farnesyl side group. This is Protoheme IX farnesyltransferase from Azorhizobium caulinodans (strain ATCC 43989 / DSM 5975 / JCM 20966 / LMG 6465 / NBRC 14845 / NCIMB 13405 / ORS 571).